The primary structure comprises 545 residues: CTP synthase (545 aa).

The segment at 1-266 is amidoligase domain; sequence MTTRYIFVTG…DELVTKRFGI (266 aa). S14 contacts CTP. S14 lines the UTP pocket. Residues 15 to 20 and D72 each bind ATP; that span reads SLGKGI. Positions 72 and 140 each coordinate Mg(2+). CTP contacts are provided by residues 147–149, 187–192, and K223; these read DIE and KTKPTQ. UTP is bound by residues 187–192 and K223; that span reads KTKPTQ. Position 239-241 (239-241) interacts with ATP; the sequence is KDV. The Glutamine amidotransferase type-1 domain maps to 291–542; it reads TIGMVGKYIE…VAAAAAHQKR (252 aa). G352 is a binding site for L-glutamine. C379 acts as the Nucleophile; for glutamine hydrolysis in catalysis. Residues 380–383, E403, and R470 contribute to the L-glutamine site; that span reads LGMQ. Residues H515 and E517 contribute to the active site.

Belongs to the CTP synthase family. In terms of assembly, homotetramer.

The enzyme catalyses UTP + L-glutamine + ATP + H2O = CTP + L-glutamate + ADP + phosphate + 2 H(+). It carries out the reaction L-glutamine + H2O = L-glutamate + NH4(+). It catalyses the reaction UTP + NH4(+) + ATP = CTP + ADP + phosphate + 2 H(+). Its pathway is pyrimidine metabolism; CTP biosynthesis via de novo pathway; CTP from UDP: step 2/2. Allosterically activated by GTP, when glutamine is the substrate; GTP has no effect on the reaction when ammonia is the substrate. The allosteric effector GTP functions by stabilizing the protein conformation that binds the tetrahedral intermediate(s) formed during glutamine hydrolysis. Inhibited by the product CTP, via allosteric rather than competitive inhibition. In terms of biological role, catalyzes the ATP-dependent amination of UTP to CTP with either L-glutamine or ammonia as the source of nitrogen. Regulates intracellular CTP levels through interactions with the four ribonucleotide triphosphates. The protein is CTP synthase of Shewanella woodyi (strain ATCC 51908 / MS32).